Here is a 188-residue protein sequence, read N- to C-terminus: Thymidine kinase (188 aa).

Position 17-24 (17-24) interacts with ATP; that stretch reads GPMFAGKT. Glu92 functions as the Proton acceptor in the catalytic mechanism. Phe121 is a binding site for substrate. The Zn(2+) site is built by Cys146 and Cys149. Residue 166-170 participates in substrate binding; it reads LILAG. 2 residues coordinate Zn(2+): Cys179 and Cys182.

It belongs to the thymidine kinase family.

The catalysed reaction is thymidine + ATP = dTMP + ADP + H(+). Functionally, phosphorylates thymidine. ASFV replicates in the cytoplasm of infected cells and contains genes encoding a number of enzymes needed for DNA synthesis, including thymidine kinase. Important for growth in swine macrophages in vitro and is a virus virulence factor in swine. The sequence is that of Thymidine kinase from African swine fever virus (isolate Tick/South Africa/Pretoriuskop Pr4/1996) (ASFV).